We begin with the raw amino-acid sequence, 509 residues long: Phosphoenolpyruvate carboxylase (509 aa).

The protein belongs to the PEPCase type 2 family. As to quaternary structure, homotetramer. Mg(2+) serves as cofactor.

The catalysed reaction is oxaloacetate + phosphate = phosphoenolpyruvate + hydrogencarbonate. Functionally, catalyzes the irreversible beta-carboxylation of phosphoenolpyruvate (PEP) to form oxaloacetate (OAA), a four-carbon dicarboxylic acid source for the tricarboxylic acid cycle. The chain is Phosphoenolpyruvate carboxylase from Metallosphaera sedula (strain ATCC 51363 / DSM 5348 / JCM 9185 / NBRC 15509 / TH2).